The sequence spans 154 residues: MHCPFCGANDTKVIDSRLVAEGEQVRRRRECLACGERFTTFETAELVLPRLIKQDGSRQPFDEEKLRAGMQRALEKRPVSVERLEAALVHIKHKLRATGEREVKSLVVGELVMAELQKLDEVAYIRFASVYRRFQDLNEFREEIDRLAREPGKE.

A zinc finger lies at 3–34 (CPFCGANDTKVIDSRLVAEGEQVRRRRECLAC). An ATP-cone domain is found at 49–139 (PRLIKQDGSR…VYRRFQDLNE (91 aa)).

Belongs to the NrdR family. Zn(2+) serves as cofactor.

Its function is as follows. Negatively regulates transcription of bacterial ribonucleotide reductase nrd genes and operons by binding to NrdR-boxes. This Pseudomonas savastanoi pv. phaseolicola (strain 1448A / Race 6) (Pseudomonas syringae pv. phaseolicola (strain 1448A / Race 6)) protein is Transcriptional repressor NrdR.